The primary structure comprises 595 residues: Aspartate--tRNA ligase (595 aa).

Glutamate 180 contacts L-aspartate. The interval 204 to 207 (QLFK) is aspartate. Arginine 226 serves as a coordination point for L-aspartate. ATP contacts are provided by residues 226–228 (RDE) and glutamine 235. Histidine 454 provides a ligand contact to L-aspartate. Glutamate 488 contacts ATP. Arginine 495 is a binding site for L-aspartate. Residue 540-543 (GLDR) coordinates ATP.

The protein belongs to the class-II aminoacyl-tRNA synthetase family. Type 1 subfamily. Homodimer.

Its subcellular location is the cytoplasm. It carries out the reaction tRNA(Asp) + L-aspartate + ATP = L-aspartyl-tRNA(Asp) + AMP + diphosphate. Catalyzes the attachment of L-aspartate to tRNA(Asp) in a two-step reaction: L-aspartate is first activated by ATP to form Asp-AMP and then transferred to the acceptor end of tRNA(Asp). This is Aspartate--tRNA ligase from Clostridium acetobutylicum (strain ATCC 824 / DSM 792 / JCM 1419 / IAM 19013 / LMG 5710 / NBRC 13948 / NRRL B-527 / VKM B-1787 / 2291 / W).